A 282-amino-acid polypeptide reads, in one-letter code: 1,4-dihydroxy-6-naphtoate synthase (282 aa).

Substrate contacts are provided by residues 57-59 (KVS) and 109-110 (TA). The active-site Proton acceptor is His-153.

The protein belongs to the MqnA/MqnD family. MqnD subfamily.

The enzyme catalyses cyclic dehypoxanthinylfutalosinate = 1,4-dihydroxy-6-naphthoate + dihydroxyacetone. It participates in quinol/quinone metabolism; menaquinone biosynthesis. In terms of biological role, catalyzes the conversion of cyclic dehypoxanthine futalosine (cyclic DHFL) into 1,4-dihydroxy-6-naphthoate, a step in the biosynthesis of menaquinone (MK, vitamin K2). The polypeptide is 1,4-dihydroxy-6-naphtoate synthase (Streptomyces coelicolor (strain ATCC BAA-471 / A3(2) / M145)).